The primary structure comprises 274 residues: Large ribosomal subunit protein uL2 (274 aa).

The interval 224–259 (AMNPVDHPHGGGEGRTSGGRHPVTPWGIPTKGYKTR) is disordered.

It belongs to the universal ribosomal protein uL2 family. In terms of assembly, part of the 50S ribosomal subunit. Forms a bridge to the 30S subunit in the 70S ribosome.

Functionally, one of the primary rRNA binding proteins. Required for association of the 30S and 50S subunits to form the 70S ribosome, for tRNA binding and peptide bond formation. It has been suggested to have peptidyltransferase activity; this is somewhat controversial. Makes several contacts with the 16S rRNA in the 70S ribosome. The chain is Large ribosomal subunit protein uL2 from Geobacter sp. (strain M21).